Consider the following 238-residue polypeptide: MTTELHDDASGRLIVGLDVPTIAEAEKVVEELGNAVSFYKIGYQLVFAGGLDFAKSLVAARKKVFLDMKLLDIDNTIAKGVENVAKMGVSMLTLHAYPKAMRAAVEAARGSDLCLLGVTVLTSMDNADLREAGYFDNAETLVLKRARQAHEAGMGGIVASAVEAQAIRQAVGPDMAIVTPGIRPAGSEKGDQKRVMTPADALRAGASHLIVARPIVGAPDRKAAALAILKEMRSIGRS.

Substrate contacts are provided by residues D18, K40, 67–76, T122, R183, Q192, and R213; that span reads DMKLLDIDNT. K69 acts as the Proton donor in catalysis.

It belongs to the OMP decarboxylase family. Type 1 subfamily. In terms of assembly, homodimer.

The enzyme catalyses orotidine 5'-phosphate + H(+) = UMP + CO2. Its pathway is pyrimidine metabolism; UMP biosynthesis via de novo pathway; UMP from orotate: step 2/2. Catalyzes the decarboxylation of orotidine 5'-monophosphate (OMP) to uridine 5'-monophosphate (UMP). The polypeptide is Orotidine 5'-phosphate decarboxylase (Brucella melitensis biotype 2 (strain ATCC 23457)).